Here is a 258-residue protein sequence, read N- to C-terminus: NAD kinase (258 aa).

Asp51 serves as the catalytic Proton acceptor. NAD(+)-binding positions include 51–52, 119–120, Lys130, Asp149, 160–165, and Ala184; these read DG, ND, and TAYSLS.

The protein belongs to the NAD kinase family. In terms of assembly, homodimer. It depends on a divalent metal cation as a cofactor.

Its subcellular location is the cytoplasm. The enzyme catalyses NAD(+) + ATP = ADP + NADP(+) + H(+). Its function is as follows. Involved in the regulation of the intracellular balance between NAD(H) and NADP(H), and is a key enzyme in the biosynthesis of NADP. Catalyzes specifically the phosphorylation on 2'-hydroxyl of the adenosine moiety of NAD to yield NADP. The chain is NAD kinase (NADK) from Thermotoga maritima (strain ATCC 43589 / DSM 3109 / JCM 10099 / NBRC 100826 / MSB8).